Reading from the N-terminus, the 712-residue chain is Solute carrier organic anion transporter family member 1C1 (712 aa).

Topologically, residues 1-43 (MDTSSKENIQLFCKTSVQPVGRPSFKTEYPSSEEKQPCCGELK) are cytoplasmic. A helical transmembrane segment spans residues 44 to 63 (VFLCALSFVYFAKALAEGYL). Residues 64–82 (KSTITQIERRFDIPSSLVG) are Extracellular-facing. The chain crosses the membrane as a helical span at residues 83-103 (VIDGSFEIGNLLVITFVSYFG). The Cytoplasmic segment spans residues 104-109 (AKLHRP). Residues 110 to 134 (KIIGAGCVIMGVGTLLIAMPQFFME) form a helical membrane-spanning segment. At 135 to 184 (QYKYERYSPSSNSTLSISPCLLESSSQLPVSVMEKSKSKISNECEVDTSS) the chain is on the extracellular side. The N-linked (GlcNAc...) asparagine glycan is linked to Asn146. Residues 185–213 (SMWIYVFLGNLLRGIGETPIQPLGIAYLD) traverse the membrane as a helical segment. Over 214–232 (DFASEDNAAFYIGCVQTVA) the chain is Cytoplasmic. Residues 233-253 (IIGPIFGFLLGSLCAKLYVDI) traverse the membrane as a helical segment. Residues 254-271 (GFVNLDHITITPKDPQWV) lie on the Extracellular side of the membrane. A helical membrane pass occupies residues 272–296 (GAWWLGYLIAGIISLLAAVPFWYLP). Residues 297 to 348 (KSLPRSQSREDSNSSSEKSKFIIDDHTDYQTPQGENAKIMEMARDFLPSLKN) lie on the Cytoplasmic side of the membrane. A helical transmembrane segment spans residues 349–370 (LFGNPVYFLYLCTSTVQFNSLF). The Extracellular segment spans residues 371 to 390 (GMVTYKPKYIEQQYGQSSSR). The chain crosses the membrane as a helical span at residues 391–414 (ANFVIGLINIPAVALGIFSGGIVM). Residues 415–418 (KKFR) lie on the Cytoplasmic side of the membrane. A helical membrane pass occupies residues 419–442 (ISVCGAAKLYLGSSVFGYLLFLSL). Residues 443–554 (FALGCENSDV…NGCPQMFLYF (112 aa)) lie on the Extracellular side of the membrane. In terms of domain architecture, Kazal-like spans 470 to 525 (RALFSDCNSRCKCSETKWEPMCGENGITYVSACLAGCQTSNRSGKNIIFYNCTCVG). Intrachain disulfides connect Cys476-Cys506, Cys482-Cys502, and Cys491-Cys523. N-linked (GlcNAc...) asparagine glycans are attached at residues Asn510, Asn520, and Asn533. Residues 555 to 577 (LVISVITSYTLSLGGIPGYILLL) form a helical membrane-spanning segment. Over 578–586 (RCIKPQLKS) the chain is Cytoplasmic. The chain crosses the membrane as a helical span at residues 587–612 (FALGIYTLAIRVLAGIPAPVYFGVLI). The Extracellular segment spans residues 613–646 (DTSCLKWGFKRCGSRGSCRLYDSNVFRHIYLGLT). Residues 647–664 (VILGTVSILLSIAVLFIL) traverse the membrane as a helical segment. Residues 665 to 712 (KKNYVSKHRSFITKRERTMVSTRFQKENYTTSDHLLQPNYWPGKETQL) are Cytoplasmic-facing.

This sequence belongs to the organo anion transporter (TC 2.A.60) family. In terms of tissue distribution, highly expressed in brain and in Leydig cells in testis. Localized in nests of Leydig cells (at protein level). Expressed in choroid plexus (at protein level). Not strongly enriched in cerebral microvessels.

It is found in the cell membrane. The catalysed reaction is 3,3',5'-triiodo-L-thyronine(out) = 3,3',5'-triiodo-L-thyronine(in). It carries out the reaction L-thyroxine(out) = L-thyroxine(in). The enzyme catalyses L-thyroxine sulfate(out) = L-thyroxine sulfate(in). In terms of biological role, mediates the Na(+)-independent high affinity transport of organic anions such as the thyroid hormones L-thyroxine (T4), L-thyroxine sulfate (T4S), and 3,3',5'-triiodo-L-thyronine (reverse T3, rT3) at the plasma membrane. Regulates T4 levels in different brain regions by transporting T4, and also by serving as an export pump for T4S, which is a source of T4 after hydrolysis by local sulfatases. Increases the access of these substrates to the intracellular sites where they are metabolized by the deiodinases. Other potential substrates, such as triiodothyronine (T3), 17-beta-glucuronosyl estradiol (17beta-estradiol 17-O-(beta-D-glucuronate)), estrone-3-sulfate (E1S) and sulfobromophthalein (BSP) are transported with much lower efficiency. Transports T4 and E1S in a pH-insensitive manner. Facilitates the transport of thyroid hormones across the blood-brain barrier and into glia and neuronal cells in the brain. This chain is Solute carrier organic anion transporter family member 1C1 (SLCO1C1), found in Homo sapiens (Human).